The primary structure comprises 593 residues: Immunoglobulin G-binding protein G (593 aa).

Positions 1–33 are cleaved as a signal peptide; sequence MEKEKKVKYFLRKSAFGLASVSAAFLVGSTVFA. 5 repeat units span residues 104-140, 179-215, 254-290, 303-357, and 373-427. The 3 X 37 AA repeats stretch occupies residues 104–290; sequence LAKAKADALK…AKTVEGVKAL (187 aa). Residues 303–427 are 2 X 55 AA repeats; it reads TYKLILNGKT…DATKTFTVTE (125 aa). The interval 503 to 567 is disordered; sequence PGDAPTEPEK…TLPTTGEGSN (65 aa). Residues 529-557 show a composition bias toward basic and acidic residues; that stretch reads AKDDAKKDDTKKEDAKKPEAKKEDAKKAE. The interval 531–555 is 5 X 5 AA repeats of [DE]-D-A-K-K; sequence DDAKKDDTKKEDAKKPEAKKEDAKK. The short motif at 559 to 563 is the LPXTG sorting signal element; it reads LPTTG. T562 carries the post-translational modification Pentaglycyl murein peptidoglycan amidated threonine. The propeptide at 563–593 is removed by sortase; that stretch reads GEGSNPFFTAAALAVMAGAGALAVASKRKED.

Its subcellular location is the secreted. The protein resides in the cell wall. This is Immunoglobulin G-binding protein G (spg) from Streptococcus sp. group G.